The primary structure comprises 460 residues: Bifunctional protein GlmU (460 aa).

A pyrophosphorylase region spans residues 1–229 (MTNYAIILAA…FNESLGVNDR (229 aa)). Residues 8–11 (LAAG), Lys22, Gln72, and 77–78 (GT) contribute to the UDP-N-acetyl-alpha-D-glucosamine site. Asp102 contributes to the Mg(2+) binding site. The UDP-N-acetyl-alpha-D-glucosamine site is built by Gly139, Glu154, Asn169, and Asn227. Asn227 contributes to the Mg(2+) binding site. Residues 230 to 250 (VALATAETVMRQRITQKHMVN) form a linker region. The tract at residues 251-460 (GVTFQNPETV…RLAHHPSRSK (210 aa)) is N-acetyltransferase. UDP-N-acetyl-alpha-D-glucosamine contacts are provided by Arg332 and Lys350. The active-site Proton acceptor is the His362. Positions 365 and 376 each coordinate UDP-N-acetyl-alpha-D-glucosamine. Acetyl-CoA-binding positions include Ala379, 385–386 (NY), Ser404, Ala422, and Arg439.

In the N-terminal section; belongs to the N-acetylglucosamine-1-phosphate uridyltransferase family. This sequence in the C-terminal section; belongs to the transferase hexapeptide repeat family. In terms of assembly, homotrimer. It depends on Mg(2+) as a cofactor.

The protein localises to the cytoplasm. The enzyme catalyses alpha-D-glucosamine 1-phosphate + acetyl-CoA = N-acetyl-alpha-D-glucosamine 1-phosphate + CoA + H(+). It carries out the reaction N-acetyl-alpha-D-glucosamine 1-phosphate + UTP + H(+) = UDP-N-acetyl-alpha-D-glucosamine + diphosphate. Its pathway is nucleotide-sugar biosynthesis; UDP-N-acetyl-alpha-D-glucosamine biosynthesis; N-acetyl-alpha-D-glucosamine 1-phosphate from alpha-D-glucosamine 6-phosphate (route II): step 2/2. The protein operates within nucleotide-sugar biosynthesis; UDP-N-acetyl-alpha-D-glucosamine biosynthesis; UDP-N-acetyl-alpha-D-glucosamine from N-acetyl-alpha-D-glucosamine 1-phosphate: step 1/1. It participates in bacterial outer membrane biogenesis; LPS lipid A biosynthesis. Catalyzes the last two sequential reactions in the de novo biosynthetic pathway for UDP-N-acetylglucosamine (UDP-GlcNAc). The C-terminal domain catalyzes the transfer of acetyl group from acetyl coenzyme A to glucosamine-1-phosphate (GlcN-1-P) to produce N-acetylglucosamine-1-phosphate (GlcNAc-1-P), which is converted into UDP-GlcNAc by the transfer of uridine 5-monophosphate (from uridine 5-triphosphate), a reaction catalyzed by the N-terminal domain. The sequence is that of Bifunctional protein GlmU from Streptococcus pyogenes serotype M28 (strain MGAS6180).